The chain runs to 536 residues: Lysosomal acid glucosylceramidase (536 aa).

The first 39 residues, 1-39 (MEFSSPSREECPKPSGRVSIMAGSLTGLLLLQAVSWASG), serve as a signal peptide directing secretion. 2 disulfides stabilise this stretch: C43–C55 and C57–C62. 3 N-linked (GlcNAc...) asparagine glycosylation sites follow: N58, N98, and N185. E274 serves as the catalytic Proton donor. N-linked (GlcNAc...) asparagine glycosylation occurs at N309. E379 serves as the catalytic Nucleophile. N-linked (GlcNAc...) asparagine glycosylation occurs at N501.

This sequence belongs to the glycosyl hydrolase 30 family. In terms of assembly, interacts with saposin-C. Interacts with SCARB2. Interacts with TCP1. Interacts with GRN; this interaction prevents aggregation of GBA1-SCARB2 complex via interaction with HSPA1A upon stress.

The protein localises to the lysosome membrane. The catalysed reaction is a beta-D-glucosyl-(1&lt;-&gt;1')-N-acylsphing-4-enine + H2O = an N-acylsphing-4-enine + D-glucose. It catalyses the reaction a beta-D-galactosyl-(1&lt;-&gt;1')-N-acylsphing-4-enine + H2O = an N-acylsphing-4-enine + D-galactose. The enzyme catalyses cholesteryl 3-beta-D-glucoside + H2O = cholesterol + D-glucose. It carries out the reaction a beta-D-glucosyl-(1&lt;-&gt;1')-N-acylsphing-4-enine + cholesterol = cholesteryl 3-beta-D-glucoside + an N-acylsphing-4-enine. The catalysed reaction is beta-D-glucosyl-N-(9Z-octadecenoyl)-sphing-4E-enine + cholesterol = N-(9Z-octadecenoyl)-sphing-4-enine + cholesteryl 3-beta-D-glucoside. It catalyses the reaction beta-D-glucosyl-N-octanoylsphing-4E-enine + cholesterol = N-octanoylsphing-4-enine + cholesteryl 3-beta-D-glucoside. The enzyme catalyses beta-D-glucosyl-N-dodecanoylsphing-4-enine + cholesterol = N-dodecanoylsphing-4-enine + cholesteryl 3-beta-D-glucoside. It carries out the reaction beta-D-glucosyl-(1&lt;-&gt;1)-N-octadecanoylsphing-4-enine + cholesterol = N-octadecanoylsphing-4-enine + cholesteryl 3-beta-D-glucoside. The catalysed reaction is beta-D-glucosyl-(1&lt;-&gt;1')-N-(15Z-tetracosenoyl)-sphing-4-enine + cholesterol = N-(15Z-tetracosenoyl)-sphing-4-enine + cholesteryl 3-beta-D-glucoside. It catalyses the reaction a beta-D-galactosyl-(1&lt;-&gt;1')-N-acylsphing-4-enine + cholesterol = cholesteryl 3-beta-D-galactoside + an N-acylsphing-4-enine. The enzyme catalyses 1-(beta-D-galactosyl)-N-dodecanoylsphing-4-enine + cholesterol = cholesteryl 3-beta-D-galactoside + N-dodecanoylsphing-4-enine. It carries out the reaction a beta-D-xylosyl-(1&lt;-&gt;1')-N-acylsphing-4-enine + cholesterol = cholesteryl 3-beta-D-xyloside + an N-acylsphing-4-enine. The catalysed reaction is beta-D-xylosyl-(1&lt;-&gt;1')-N-(9Z-octadecenoyl)-sphing-4-enine + cholesterol = cholesteryl 3-beta-D-xyloside + N-(9Z-octadecenoyl)-sphing-4-enine. It functions in the pathway steroid metabolism; cholesterol metabolism. It participates in sphingolipid metabolism. Its function is as follows. Glucosylceramidase that catalyzes, within the lysosomal compartment, the hydrolysis of glucosylceramides/GlcCers (such as beta-D-glucosyl-(1&lt;-&gt;1')-N-acylsphing-4-enine) into free ceramides (such as N-acylsphing-4-enine) and glucose. Plays a central role in the degradation of complex lipids and the turnover of cellular membranes. Through the production of ceramides, participates in the PKC-activated salvage pathway of ceramide formation. Catalyzes the glucosylation of cholesterol, through a transglucosylation reaction where glucose is transferred from GlcCer to cholesterol. GlcCer containing mono-unsaturated fatty acids (such as beta-D-glucosyl-N-(9Z-octadecenoyl)-sphing-4-enine) are preferred as glucose donors for cholesterol glucosylation when compared with GlcCer containing same chain length of saturated fatty acids (such as beta-D-glucosyl-N-octadecanoyl-sphing-4-enine). Under specific conditions, may alternatively catalyze the reverse reaction, transferring glucose from cholesteryl 3-beta-D-glucoside to ceramide. Can also hydrolyze cholesteryl 3-beta-D-glucoside producing glucose and cholesterol. Catalyzes the hydrolysis of galactosylceramides/GalCers (such as beta-D-galactosyl-(1&lt;-&gt;1')-N-acylsphing-4-enine), as well as the transfer of galactose between GalCers and cholesterol in vitro, but with lower activity than with GlcCers. Contrary to GlcCer and GalCer, xylosylceramide/XylCer (such as beta-D-xyosyl-(1&lt;-&gt;1')-N-acylsphing-4-enine) is not a good substrate for hydrolysis, however it is a good xylose donor for transxylosylation activity to form cholesteryl 3-beta-D-xyloside. The chain is Lysosomal acid glucosylceramidase (GBA1) from Pan troglodytes (Chimpanzee).